Reading from the N-terminus, the 1082-residue chain is TNF receptor-associated factor homolog 1b (1082 aa).

Residues 1–54 are disordered; that stretch reads MAEAVDEDSGVGRSLEESSNGQHSQAGEALSEWRSSGQVENGTPSTSPSYWDID. Position 2 is an N-acetylalanine (Ala-2). Polar residues predominate over residues 33–49; it reads WRSSGQVENGTPSTSPS. One can recognise an MATH domain in the interval 67–198; it reads YGQYTWKIPK…SGCLTIEAKV (132 aa). Disordered regions lie at residues 358 to 388, 440 to 666, 697 to 762, 780 to 800, 812 to 841, and 858 to 889; these read LPPK…ERDE, TEQR…SNVG, SIVN…QVVL, LSAP…APII, SSVQ…NQQT, and SSSS…PTSS. Composition is skewed to basic and acidic residues over residues 359 to 388 and 440 to 453; these read PPKD…ERDE and TEQR…EREK. Positions 446–507 form a coiled coil; sequence RGAAEREKKS…EEEKDSVTEK (62 aa). A compositionally biased stretch (basic residues) spans 454–471; sequence KSKKKQAKQKRNKNKGKD. Positions 472 to 488 are enriched in basic and acidic residues; the sequence is KRKEEKVSFATHAKDLE. Low complexity-rich tracts occupy residues 519–534 and 560–573; these read GDVS…SADI and SSEG…ISIS. 2 stretches are compositionally biased toward polar residues: residues 588 to 630 and 645 to 666; these read DDSS…QQVK and QPST…SNVG. Composition is skewed to low complexity over residues 858–871 and 878–889; these read SSSS…SSHG and PSSSYSQAPTSS.

In terms of assembly, forms homooligomers. Interacts with SNC1, RPS2 and CPR1/CPR30. Interacts with ATG6.

The protein resides in the cytoplasm. It is found in the cell membrane. Its function is as follows. Functions redundantly with TRAF1A in the regulation of plant immune response. Contributes to the turnover of the nucleotide-binding domain and leucine-rich repeat-containing (NB-LRR) immune receptors SNC1 and RPS2. May associate with an E3 ubiquitin-protein ligase complex, which modulates ubiquitination and subsequent degradation of NB-LRR immune sensors to maintain their homeostasis. Functions redundantly with TRAF1A in the regulation of autophagosome formation. Required for SINAT1- and SINAT2-mediated ubiquitination and destabilization of ATG6. Functions as a molecular adapter that helps to regulate autophagy by modulating ATG6 stability. This is TNF receptor-associated factor homolog 1b from Arabidopsis thaliana (Mouse-ear cress).